The sequence spans 163 residues: Nucleotide-binding protein LA_3406 (163 aa).

Belongs to the YajQ family.

In terms of biological role, nucleotide-binding protein. This Leptospira interrogans serogroup Icterohaemorrhagiae serovar Lai (strain 56601) protein is Nucleotide-binding protein LA_3406.